Reading from the N-terminus, the 67-residue chain is MRKQLEEARKLSPVELEKLVREKKRELMELRFQASIGQLSQNHKIRDLKRQIARLLTVLNEKRRQNA.

The protein belongs to the universal ribosomal protein uL29 family.

This is Large ribosomal subunit protein uL29 (rpmC) from Thermus thermophilus.